The sequence spans 492 residues: Membrane-bound lytic murein transglycosylase F (492 aa).

The N-terminal stretch at M1 to A18 is a signal peptide. The tract at residues I19 to L268 is non-LT domain. The LT domain stretch occupies residues Q270–Q492. E313 is an active-site residue.

It in the N-terminal section; belongs to the bacterial solute-binding protein 3 family. This sequence in the C-terminal section; belongs to the transglycosylase Slt family.

It localises to the cell outer membrane. The catalysed reaction is Exolytic cleavage of the (1-&gt;4)-beta-glycosidic linkage between N-acetylmuramic acid (MurNAc) and N-acetylglucosamine (GlcNAc) residues in peptidoglycan, from either the reducing or the non-reducing ends of the peptidoglycan chains, with concomitant formation of a 1,6-anhydrobond in the MurNAc residue.. Its function is as follows. Murein-degrading enzyme that degrades murein glycan strands and insoluble, high-molecular weight murein sacculi, with the concomitant formation of a 1,6-anhydromuramoyl product. Lytic transglycosylases (LTs) play an integral role in the metabolism of the peptidoglycan (PG) sacculus. Their lytic action creates space within the PG sacculus to allow for its expansion as well as for the insertion of various structures such as secretion systems and flagella. The protein is Membrane-bound lytic murein transglycosylase F of Pasteurella multocida (strain Pm70).